An 85-amino-acid polypeptide reads, in one-letter code: Hepcidin (85 aa).

The first 22 residues, 1–22, serve as a signal peptide directing secretion; that stretch reads MALSTRIQAACLLLLLLASVAS. Residues 23–54 constitute a propeptide that is removed on maturation; the sequence is VSVLPHQTGQLTDLRAQDTAGAEAGLQPTLQL. 4 cysteine pairs are disulfide-bonded: C67-C83, C70-C73, C71-C79, and C74-C82.

Belongs to the hepcidin family. In terms of assembly, interacts with SLC40A1; this interaction promotes SLC40A1 rapid ubiquitination.

The protein localises to the secreted. Liver-produced hormone that constitutes the main circulating regulator of iron absorption and distribution across tissues. Acts by promoting endocytosis and degradation of ferroportin/SLC40A1, leading to the retention of iron in iron-exporting cells and decreased flow of iron into plasma. Controls the major flows of iron into plasma: absorption of dietary iron in the intestine, recycling of iron by macrophages, which phagocytose old erythrocytes and other cells, and mobilization of stored iron from hepatocytes. In terms of biological role, has strong antimicrobial activity against E.coli ML35P N.cinerea and weaker against S.epidermidis, S.aureus and group b streptococcus bacteria. Active against the fungus C.albicans. No activity against P.aeruginosa. The polypeptide is Hepcidin (HAMP) (Canis lupus familiaris (Dog)).